The following is a 168-amino-acid chain: Myosin regulatory light chain 11 (168 aa).

A2 bears the N,N,N-trimethylalanine mark. S15 is subject to Phosphoserine. EF-hand domains lie at 24–59 (TQIQEFKEAFTVIDQNRDGIIDKDDLRETFAAMGRL), 94–129 (DPEDVIMGAFKVLDPDGKGSIKKSFLEELLTTQCDR), and 130–165 (FTPEEIKNMWAAFPPDVAGNVDYKNICYVITHGEDK). Ca(2+)-binding residues include D37, N39, D41, and D48.

Myosin is a hexamer of 2 heavy chains and 4 light chains. In terms of processing, the N-terminus is blocked. N,N,N-trimethylalanine, found in other myosin light chains would not have been detected in the N-terminal tryptic peptide in PubMed:7358336 because it would remain trimethylated and ninhydrin negative after hydrolysis.

Myosin regulatory subunit that plays an essential to maintain muscle integrity during early development. Plays a role in muscle contraction. The chain is Myosin regulatory light chain 11 (MYL11) from Gallus gallus (Chicken).